We begin with the raw amino-acid sequence, 412 residues long: uncharacterized protein (412 aa).

Disordered stretches follow at residues 150-171 (NTPG…QLGD), 177-196 (QITS…QQQQ), and 302-412 (QAQQ…PLNP). Positions 156–168 (QAQQQQQQQQQQQ) are enriched in low complexity. Polar residues-rich tracts occupy residues 177–187 (QITSSNNSGNS) and 310–321 (MGSSPTHSSPTI). The segment covering 335 to 345 (GGIINTNTNLN) has biased composition (low complexity). Residues 350-363 (VSPNQPMPNSSPIL) are compositionally biased toward polar residues. Low complexity-rich tracts occupy residues 364-373 (PTNASSVVPP) and 381-394 (TSNN…TTSP).

This is an uncharacterized protein from Dictyostelium discoideum (Social amoeba).